A 373-amino-acid chain; its full sequence is Indole glucosinolate O-methyltransferase 4 (373 aa).

Residues Gly-217, Asp-240, Asp-260, Met-261, and Lys-274 each coordinate S-adenosyl-L-homocysteine. His-278 serves as the catalytic Proton acceptor.

The protein belongs to the class I-like SAM-binding methyltransferase superfamily. Cation-independent O-methyltransferase family. Interacts with B'GAMMA.

Its pathway is secondary metabolite biosynthesis. Functionally, involved in indole glucosinolate biosynthesis. Catalyzes methoxylation reactions of the glucosinolate indole ring. Converts the hydroxy intermediates 4-hydroxy-indol-3-yl-methylglucosinolate (4OH-I3M) and 1-hydroxy-indol-3-yl-methylglucosinolate (1OH-I3M) to 4-methoxy-indol-3-yl-methylglucosinolate (4MO-I3M) and 1-methoxy-indol-3-yl-methylglucosinolate(1MO-I3M), respectively. The sequence is that of Indole glucosinolate O-methyltransferase 4 from Arabidopsis thaliana (Mouse-ear cress).